A 673-amino-acid chain; its full sequence is UvrABC system protein B (673 aa).

The region spanning 26-183 (ANFEAGLAKQ…RHLTDLQYTR (158 aa)) is the Helicase ATP-binding domain. Position 39–46 (39–46 (GVTGSGKT)) interacts with ATP. The Beta-hairpin motif lies at 92–115 (YYDYYQPEAYVPSSDTFIEKDSSI). Residues 431–597 (QVDDLMSEIH…SVERPISDIM (167 aa)) form the Helicase C-terminal domain. Residues 601-631 (REDAAEKKSGKGRSKSRQVAEETPDYRAMKP) are disordered. Residues 618–630 (QVAEETPDYRAMK) show a composition bias toward basic and acidic residues. Positions 635–670 (AGKLKSLEQKMYQHAKDLEFEAAAQIRDQIQKLKTA) constitute a UVR domain.

Belongs to the UvrB family. Forms a heterotetramer with UvrA during the search for lesions. Interacts with UvrC in an incision complex.

It is found in the cytoplasm. In terms of biological role, the UvrABC repair system catalyzes the recognition and processing of DNA lesions. A damage recognition complex composed of 2 UvrA and 2 UvrB subunits scans DNA for abnormalities. Upon binding of the UvrA(2)B(2) complex to a putative damaged site, the DNA wraps around one UvrB monomer. DNA wrap is dependent on ATP binding by UvrB and probably causes local melting of the DNA helix, facilitating insertion of UvrB beta-hairpin between the DNA strands. Then UvrB probes one DNA strand for the presence of a lesion. If a lesion is found the UvrA subunits dissociate and the UvrB-DNA preincision complex is formed. This complex is subsequently bound by UvrC and the second UvrB is released. If no lesion is found, the DNA wraps around the other UvrB subunit that will check the other stand for damage. In Xanthomonas oryzae pv. oryzae (strain PXO99A), this protein is UvrABC system protein B.